The following is a 333-amino-acid chain: Homeobox protein Hox-A1 (333 aa).

A disordered region spans residues 61–82 (ITSPHHHHHHHHHPQPATYQTS). A compositionally biased stretch (basic residues) spans 64–74 (PHHHHHHHHHP). The interaction with OGT stretch occupies residues 74–202 (PQPATYQTSG…PASETSSPAQ (129 aa)). Residue Thr-152 is glycosylated (O-linked (GlcNAc) threonine). Residues 203 to 208 (TFDWMK) carry the Antp-type hexapeptide motif. A DNA-binding region (homeobox) is located at residues 227 to 286 (QPNAVRTNFTTKQLTELEKEFHFNKYLTRARSEIAASLQLNETQVKIWFQNRRMKQKKRE). Residues 279–333 (RMKQKKREKEGLLPMSPATPPGSDEKTEESSEKSSSSPSAPSPASSTSDTLTTSH) are disordered. A compositionally biased stretch (basic and acidic residues) spans 301–310 (SDEKTEESSE). Over residues 311 to 333 (KSSSSPSAPSPASSTSDTLTTSH) the composition is skewed to low complexity.

It belongs to the Antp homeobox family. Labial subfamily. In terms of assembly, interacts with OGT (via TPR repeats domain); the interaction takes place mainly in the nucleus. Forms a DNA-binding heterodimer with transcription factor PBX1. In terms of processing, glycosylated by OGT.

Its subcellular location is the nucleus. Sequence-specific transcription factor. Regulates multiple developmental processes including brainstem, inner and outer ear, abducens nerve and cardiovascular development and morphogenesis as well as cognition and behavior. Also part of a developmental regulatory system that provides cells with specific positional identities on the anterior-posterior axis. Acts on the anterior body structures. Seems to act in the maintenance and/or generation of hindbrain segments. Activates transcription in the presence of PBX1A and PKNOX1. The protein is Homeobox protein Hox-A1 (Hoxa1) of Rattus norvegicus (Rat).